We begin with the raw amino-acid sequence, 98 residues long: DNA-directed RNA polymerase subunit Rpo11 (98 aa).

This sequence belongs to the archaeal Rpo11/eukaryotic RPB11/RPC19 RNA polymerase subunit family. In terms of assembly, part of the RNA polymerase complex.

The protein resides in the cytoplasm. It carries out the reaction RNA(n) + a ribonucleoside 5'-triphosphate = RNA(n+1) + diphosphate. Its function is as follows. DNA-dependent RNA polymerase (RNAP) catalyzes the transcription of DNA into RNA using the four ribonucleoside triphosphates as substrates. The protein is DNA-directed RNA polymerase subunit Rpo11 of Korarchaeum cryptofilum (strain OPF8).